We begin with the raw amino-acid sequence, 188 residues long: Der GTPase-activating protein YihI (188 aa).

2 disordered regions span residues 1 to 80 and 162 to 188; these read MKQP…VPVP and DEDD…KDTF. A compositionally biased stretch (basic and acidic residues) spans 27-37; it reads TRDELDAEARD. The span at 47-57 shows a compositional bias: polar residues; the sequence is NRSGARTNVEG.

This sequence belongs to the YihI family. Interacts with Der.

Functionally, a GTPase-activating protein (GAP) that modifies Der/EngA GTPase function. May play a role in ribosome biogenesis. The chain is Der GTPase-activating protein YihI from Yersinia pseudotuberculosis serotype O:3 (strain YPIII).